Reading from the N-terminus, the 144-residue chain is Protein archease (144 aa).

Ca(2+)-binding residues include Asp-14, Asp-143, and Ile-144.

This sequence belongs to the archease family.

In terms of biological role, activates the tRNA-splicing ligase complex by facilitating the enzymatic turnover of catalytic subunit RtcB. Acts by promoting the guanylylation of RtcB, a key intermediate step in tRNA ligation. Can also alter the NTP specificity of RtcB such that ATP, dGTP or ITP is used efficiently. This Aeropyrum pernix (strain ATCC 700893 / DSM 11879 / JCM 9820 / NBRC 100138 / K1) protein is Protein archease.